We begin with the raw amino-acid sequence, 808 residues long: Bifunctional uridylyltransferase/uridylyl-removing enzyme (808 aa).

The segment at 1–315 is uridylyltransferase; sequence MEAESPCAAS…ALVRRPKRRP (315 aa). The tract at residues 316–609 is uridylyl-removing; that stretch reads LDEGVVEYAG…EISPRDGERI (294 aa). The HD domain maps to 430-544; that stretch reads VDRHVVETAV…LEVLHALSEA (115 aa). ACT domains are found at residues 610-686 and 730-805; these read DAVI…GMLQ and ILEV…VDEP.

This sequence belongs to the GlnD family. It depends on Mg(2+) as a cofactor.

It catalyses the reaction [protein-PII]-L-tyrosine + UTP = [protein-PII]-uridylyl-L-tyrosine + diphosphate. The catalysed reaction is [protein-PII]-uridylyl-L-tyrosine + H2O = [protein-PII]-L-tyrosine + UMP + H(+). Functionally, modifies, by uridylylation and deuridylylation, the PII regulatory protein (GlnB), in response to the nitrogen status of the cell that GlnD senses through the glutamine level. Under low glutamine levels, catalyzes the conversion of the PII protein and UTP to PII-UMP and PPi, while under higher glutamine levels, GlnD hydrolyzes PII-UMP to PII and UMP (deuridylylation). Thus, controls uridylylation state and activity of the PII protein, and plays an important role in the regulation of nitrogen assimilation and metabolism. The chain is Bifunctional uridylyltransferase/uridylyl-removing enzyme from Mycobacterium tuberculosis (strain CDC 1551 / Oshkosh).